We begin with the raw amino-acid sequence, 165 residues long: Polcalcin Cup a 4 (165 aa).

EF-hand domains are found at residues 22 to 57 (QSVH…MGSE), 58 to 86 (VDEA…FVDL), 91 to 126 (ATVK…VGEP), and 127 to 162 (CTIE…EMTD). Residues Asp35, Asn37, Asp39, Lys41, Glu46, Asp71, Asp73, Asp75, Tyr77, Glu82, Asp104, Asp106, Asn108, Thr110, Glu115, Asp140, Asn142, Asp144, and Glu151 each contribute to the Ca(2+) site.

As to quaternary structure, may exist as monomer and dimer. In terms of tissue distribution, expressed in mature pollen grains.

This is Polcalcin Cup a 4 from Hesperocyparis arizonica (Arizona cypress).